Here is a 445-residue protein sequence, read N- to C-terminus: uncharacterized protein (445 aa).

Histidine 66 contributes to the Zn(2+) binding site. Glutamate 69 acts as the Proton acceptor in catalysis. Histidine 70 and glutamate 146 together coordinate Zn(2+). The interval 232–251 (GRQSAPPRKSTGRINGGPAL) is disordered.

Belongs to the peptidase M16 family. The cofactor is Zn(2+).

This is an uncharacterized protein from Mycobacterium leprae (strain TN).